Reading from the N-terminus, the 309-residue chain is Ankyrin repeat protein VACWR203 (309 aa).

5 ANK repeats span residues 13 to 44 (SVFKGFSDKVRKNDLDMNVVKELLSNGASLTI), 110 to 142 (KYGTPLHILASNKKLITPNYMKLLVYNGNDINA), 160 to 189 (FVYHNIEYGIRYYNEKIIDAFIELGADLTI), 197 to 231 (PVVYCIHSNAEYGYNNITNIKIIRKLLNLSRRASH), and 269 to 298 (EGRTPLHCAIQHNFTQIAKYLLDRGADIVV).

This sequence belongs to the orthopoxviruses VACWR203 protein family.

This Bos taurus (Bovine) protein is Ankyrin repeat protein VACWR203.